A 394-amino-acid chain; its full sequence is Elongation factor Tu, mitochondrial (394 aa).

The region spanning 10–204 (KPHCNIGTIG…AVDNYIPQPE (195 aa)) is the tr-type G domain. The G1 stretch occupies residues 19 to 26 (GHVDHGKT). 19–26 (GHVDHGKT) is a GTP binding site. Positions 60-64 (GITIS) are G2. Positions 81 to 84 (DCPG) are G3. Residues 81–85 (DCPGH) and 136–139 (NKVD) each bind GTP. The tract at residues 136–139 (NKVD) is G4. Positions 174–176 (SAL) are G5.

Belongs to the TRAFAC class translation factor GTPase superfamily. Classic translation factor GTPase family. EF-Tu/EF-1A subfamily.

It is found in the mitochondrion. Its function is as follows. This protein promotes the GTP-dependent binding of aminoacyl-tRNA to the A-site of ribosomes during protein biosynthesis. This Reclinomonas americana protein is Elongation factor Tu, mitochondrial (TUFA).